The primary structure comprises 219 residues: MEYNRLIDHTLLKADATVEQIEKLCKEALQYNFFSVCVNSAFVPLAKSFLEGSDVKVATTIGFPLGASATAVKAFEVEQALKEGADEFDMVINVGWLKSKLYRLVHEDIAEVVKAAGGKVVKVIIETCYLTDDEKKIASSIAAAAGAHYVKTSTGFGTGGATVEDVQLIRSVVGPNIGVKASGGIRDAATLKAMVDAGANRIGASASVKIMEELRIEGN.

Asp-89 functions as the Proton donor/acceptor in the catalytic mechanism. The active-site Schiff-base intermediate with acetaldehyde is the Lys-151. Catalysis depends on Lys-180, which acts as the Proton donor/acceptor.

Belongs to the DeoC/FbaB aldolase family. DeoC type 1 subfamily.

Its subcellular location is the cytoplasm. It carries out the reaction 2-deoxy-D-ribose 5-phosphate = D-glyceraldehyde 3-phosphate + acetaldehyde. It participates in carbohydrate degradation; 2-deoxy-D-ribose 1-phosphate degradation; D-glyceraldehyde 3-phosphate and acetaldehyde from 2-deoxy-alpha-D-ribose 1-phosphate: step 2/2. Its function is as follows. Catalyzes a reversible aldol reaction between acetaldehyde and D-glyceraldehyde 3-phosphate to generate 2-deoxy-D-ribose 5-phosphate. In Coprothermobacter proteolyticus (strain ATCC 35245 / DSM 5265 / OCM 4 / BT), this protein is Deoxyribose-phosphate aldolase.